Reading from the N-terminus, the 227-residue chain is Ribose-5-phosphate isomerase A (227 aa).

Substrate contacts are provided by residues 26-29, 82-85, and 95-98; these read TGST, DGAD, and KGGG. Glu104 serves as the catalytic Proton acceptor. Residue Lys122 participates in substrate binding.

It belongs to the ribose 5-phosphate isomerase family. Homodimer.

The catalysed reaction is aldehydo-D-ribose 5-phosphate = D-ribulose 5-phosphate. The protein operates within carbohydrate degradation; pentose phosphate pathway; D-ribose 5-phosphate from D-ribulose 5-phosphate (non-oxidative stage): step 1/1. In terms of biological role, catalyzes the reversible conversion of ribose-5-phosphate to ribulose 5-phosphate. The sequence is that of Ribose-5-phosphate isomerase A from Streptococcus pneumoniae (strain ATCC 700669 / Spain 23F-1).